Consider the following 436-residue polypeptide: Serine/threonine-protein kinase 40 (436 aa).

Over residues 1–10 (MKRRASDRGA) the composition is skewed to basic and acidic residues. A disordered region spans residues 1–25 (MKRRASDRGAGETSARAKALGSGIS). Positions 35–332 (FILGPRLGNS…DVLEALSSII (298 aa)) constitute a Protein kinase domain. ATP contacts are provided by residues 41 to 49 (LGNSPVPSI) and Lys-66. Asp-197 acts as the Proton acceptor in catalysis. Residues 396–417 (RSWVPKRQSGAGVPPVRRLGHD) form a disordered region.

This sequence belongs to the protein kinase superfamily. CAMK Ser/Thr protein kinase family.

The protein localises to the nucleus. It localises to the cytoplasm. It carries out the reaction L-seryl-[protein] + ATP = O-phospho-L-seryl-[protein] + ADP + H(+). The enzyme catalyses L-threonyl-[protein] + ATP = O-phospho-L-threonyl-[protein] + ADP + H(+). Its function is as follows. May be a negative regulator of NF-kappa-B and p53-mediated gene transcription. In Bos taurus (Bovine), this protein is Serine/threonine-protein kinase 40 (STK40).